Reading from the N-terminus, the 152-residue chain is Protein-export protein SecB (152 aa).

Belongs to the SecB family. Homotetramer, a dimer of dimers. One homotetramer interacts with 1 SecA dimer.

The protein localises to the cytoplasm. Functionally, one of the proteins required for the normal export of preproteins out of the cell cytoplasm. It is a molecular chaperone that binds to a subset of precursor proteins, maintaining them in a translocation-competent state. It also specifically binds to its receptor SecA. This is Protein-export protein SecB from Rickettsia akari (strain Hartford).